Reading from the N-terminus, the 628-residue chain is Zinc finger protein 555 (628 aa).

One can recognise a KRAB domain in the interval 4–77; it reads VVFEDVAVDF…ESKIATFTRN (74 aa). The C2H2-type 1; degenerate zinc-finger motif lies at 172–194; the sequence is YQCQECGQAYSCRSHLRMHVRTH. C2H2-type zinc fingers lie at residues 200–222, 228–250, 256–278, 284–306, 312–334, 340–362, 368–390, 396–418, 424–446, 452–474, 480–502, 508–530, 536–558, and 564–586; these read YVCKLCGKTFPRTSSLNRHVRIH, YECKQCGKAFIDFSSLTSHLRSH, YKCKECGKAFSYSSTFRRHTITH, YKCKECAEAFSYSSTFRRHMISH, HKCKECGEAFSYSSAFRRHMITH, YECKQCGKTFIYLQSFRRHERIH, YECKQCGKTFIYPQSFRRHERTH, YECNQCGKAFSHPSSFRGHMRVH, YECKQCGKTFNWPISLRKHMRTH, YECKQCGKAFSLSACFREHVRMH, YECKLCGKAFYCHISLQKHMRRH, YKCKQCGKAFSWPELLQQHVRTH, YECKECGKVFKWPSSLPIHMRLH, and YQCKHCGKAFNCSSSLRRHVRIH.

Belongs to the krueppel C2H2-type zinc-finger protein family.

The protein resides in the nucleus. In terms of biological role, may be involved in transcriptional regulation. The protein is Zinc finger protein 555 (ZNF555) of Homo sapiens (Human).